The sequence spans 189 residues: dCTP deaminase (189 aa).

DCTP is bound by residues 112–117 (KSTYAR), 136–138 (TLE), Gln-157, Tyr-171, and Gln-181. Glu-138 functions as the Proton donor/acceptor in the catalytic mechanism.

Belongs to the dCTP deaminase family. Homotrimer.

The catalysed reaction is dCTP + H2O + H(+) = dUTP + NH4(+). Its pathway is pyrimidine metabolism; dUMP biosynthesis; dUMP from dCTP (dUTP route): step 1/2. Functionally, catalyzes the deamination of dCTP to dUTP. The sequence is that of dCTP deaminase from Leptothrix cholodnii (strain ATCC 51168 / LMG 8142 / SP-6) (Leptothrix discophora (strain SP-6)).